Here is a 261-residue protein sequence, read N- to C-terminus: Auxin-responsive protein IAA10 (261 aa).

Residues 1–43 (MNGLQEVCSSSGSVMIGLPAEEDENAAHSSEDSSCPDESVSET) are disordered. The EAR-like (transcriptional repression) signature appears at 45–49 (LDLAL). Positions 62 to 90 (LSSSSSSLTRESGTKRSADSSPAAASNAT) are disordered. Residues 80 to 89 (DSSPAAASNA) are compositionally biased toward low complexity. Positions 151 to 253 (SMLVKVTMDG…SVTRLRIMKT (103 aa)) constitute a PB1 domain.

The protein belongs to the Aux/IAA family. As to quaternary structure, homodimers and heterodimers. Preferentially expressed in vegetative organs.

The protein localises to the nucleus. Its function is as follows. Aux/IAA proteins are short-lived transcriptional factors that function as repressors of early auxin response genes at low auxin concentrations. Repression is thought to result from the interaction with auxin response factors (ARFs), proteins that bind to the auxin-responsive promoter element (AuxRE). Formation of heterodimers with ARF proteins may alter their ability to modulate early auxin response genes expression. The chain is Auxin-responsive protein IAA10 (IAA10) from Arabidopsis thaliana (Mouse-ear cress).